The following is a 240-amino-acid chain: LexA repressor (240 aa).

The segment at residues 26–46 (FDEMKDALDLASKSGIHRLIT) is a DNA-binding region (H-T-H motif). The segment at 78-113 (QPRRGFSPSVIEGSLGKPQPVQPPAPAKPANDENNS) is disordered. Active-site for autocatalytic cleavage activity residues include serine 160 and lysine 198.

Belongs to the peptidase S24 family. As to quaternary structure, homodimer.

It catalyses the reaction Hydrolysis of Ala-|-Gly bond in repressor LexA.. In terms of biological role, represses a number of genes involved in the response to DNA damage (SOS response), including recA and lexA. In the presence of single-stranded DNA, RecA interacts with LexA causing an autocatalytic cleavage which disrupts the DNA-binding part of LexA, leading to derepression of the SOS regulon and eventually DNA repair. The polypeptide is LexA repressor (Rhizobium rhizogenes (strain K84 / ATCC BAA-868) (Agrobacterium radiobacter)).